Consider the following 101-residue polypeptide: MSQKIRIKLKSYDHNLVDKSAEKIVKTVKTTGAVVTGPIPLPTNKKIFTVLRSPHVNKKSREQFELSSYKRLLDIYSSSSKTIDALMKLELPSGVEVEIKV.

This sequence belongs to the universal ribosomal protein uS10 family. In terms of assembly, part of the 30S ribosomal subunit.

Functionally, involved in the binding of tRNA to the ribosomes. The chain is Small ribosomal subunit protein uS10 from Christiangramia forsetii (strain DSM 17595 / CGMCC 1.15422 / KT0803) (Gramella forsetii).